A 1406-amino-acid polypeptide reads, in one-letter code: Sterol 3-beta-glucosyltransferase (1406 aa).

Residues 83-231 (ARFDESSDSD…IHSSHESSTS (149 aa)) form a disordered region. Polar residues predominate over residues 110–128 (GSSNPVNSQTEQRSGSQTS). Low complexity predominate over residues 209-231 (SAGRSQNSSQESSIHSSHESSTS). In terms of domain architecture, GRAM 1 spans 236-286 (RLMEMFDFNKPEKVLVEYACSLLQSMLLQGYMYVTEGHICFYAYLPRKSTV). The region spanning 286–385 (VAIKSGYLHK…WVKALQKVIF (100 aa)) is the PH domain. Disordered regions lie at residues 457 to 558 (ASGH…AESA) and 576 to 622 (LDKR…DGKP). Residues 468–478 (HADRSPRSDRT) are compositionally biased toward basic and acidic residues. Polar residues-rich tracts occupy residues 490 to 499 (GTSQPGNGSA) and 531 to 548 (SESI…SAVW). A compositionally biased stretch (basic and acidic residues) spans 576–587 (LDKRACSDERSG). Residues 730 to 796 (DRFRAHFALP…KDVENVEKEK (67 aa)) form the GRAM 2 domain. UDP-alpha-D-glucose-binding residues include Ser917, Arg918, Asp920, Ala1220, His1222, His1235, Gly1239, Thr1240, Asp1259, and Gln1260. Residues 1334-1406 (QRSIASSTPF…LTNSIHGAGR (73 aa)) are disordered. A compositionally biased stretch (low complexity) spans 1336-1349 (SIASSTPFSPTPSA). Residues 1355–1375 (QGDDDVEDSEEWTFVGDDNEM) show a composition bias toward acidic residues. A compositionally biased stretch (basic and acidic residues) spans 1376-1387 (DMSRRMRDRAIS). Positions 1397 to 1406 (LTNSIHGAGR) are enriched in polar residues.

The protein belongs to the glycosyltransferase 28 family.

It localises to the cytoplasm. Its subcellular location is the preautophagosomal structure membrane. The enzyme catalyses a sterol + UDP-alpha-D-glucose = a sterol 3-beta-D-glucoside + UDP + H(+). The catalysed reaction is ergosterol + UDP-alpha-D-glucose = ergosteryl 3-beta-D-glucoside + UDP + H(+). Functionally, sterol glycosyltransferase responsible for the glycosylation of ergosterol to form ergosterol-glucoside. The sequence is that of Sterol 3-beta-glucosyltransferase from Aspergillus clavatus (strain ATCC 1007 / CBS 513.65 / DSM 816 / NCTC 3887 / NRRL 1 / QM 1276 / 107).